The chain runs to 638 residues: Terrein cluster-specific transcription factor terR (638 aa).

A DNA-binding region (zn(2)-C6 fungal-type) is located at residues 50–76; sequence CDMCKSKKVRCDGGTPCSYCNLHDLRC.

The protein localises to the nucleus. Transcription factor that regulates specifically the terrein biosynthesis gene cluster. Recognizes CGG direct repeat consensus sequences in the terrein cluster forming the high affinity consensus motif TCGGHHWYHCGGH. In Aspergillus terreus (strain NIH 2624 / FGSC A1156), this protein is Terrein cluster-specific transcription factor terR.